Reading from the N-terminus, the 288-residue chain is Phosphatidylglycerol--prolipoprotein diacylglyceryl transferase (288 aa).

The next 4 membrane-spanning stretches (helical) occupy residues 8-28 (IGPI…FVGI), 49-69 (AFVA…LFNL), 79-99 (ILAV…GIAG), and 109-129 (INPL…QAIG). Arg130 lines the a 1,2-diacyl-sn-glycero-3-phospho-(1'-sn-glycerol) pocket. 3 helical membrane-spanning segments follow: residues 203 to 223 (PAML…WFIL), 232 to 252 (GYMW…VSFF), and 259 to 279 (FFNF…SIFF).

This sequence belongs to the Lgt family.

Its subcellular location is the cell inner membrane. It catalyses the reaction L-cysteinyl-[prolipoprotein] + a 1,2-diacyl-sn-glycero-3-phospho-(1'-sn-glycerol) = an S-1,2-diacyl-sn-glyceryl-L-cysteinyl-[prolipoprotein] + sn-glycerol 1-phosphate + H(+). Its pathway is protein modification; lipoprotein biosynthesis (diacylglyceryl transfer). Catalyzes the transfer of the diacylglyceryl group from phosphatidylglycerol to the sulfhydryl group of the N-terminal cysteine of a prolipoprotein, the first step in the formation of mature lipoproteins. The protein is Phosphatidylglycerol--prolipoprotein diacylglyceryl transferase of Fusobacterium nucleatum subsp. nucleatum (strain ATCC 25586 / DSM 15643 / BCRC 10681 / CIP 101130 / JCM 8532 / KCTC 2640 / LMG 13131 / VPI 4355).